The following is a 79-amino-acid chain: Acyl carrier protein (79 aa).

The 76-residue stretch at 2–77 (ESIEQRVKKI…QAVDYINSHG (76 aa)) folds into the Carrier domain. An O-(pantetheine 4'-phosphoryl)serine modification is found at serine 37.

The protein belongs to the acyl carrier protein (ACP) family. 4'-phosphopantetheine is transferred from CoA to a specific serine of apo-ACP by AcpS. This modification is essential for activity because fatty acids are bound in thioester linkage to the sulfhydryl of the prosthetic group.

It localises to the cytoplasm. It participates in lipid metabolism; fatty acid biosynthesis. Functionally, carrier of the growing fatty acid chain in fatty acid biosynthesis. In Bordetella parapertussis (strain 12822 / ATCC BAA-587 / NCTC 13253), this protein is Acyl carrier protein.